Reading from the N-terminus, the 318-residue chain is Ficolin-1-B (318 aa).

Residues 1 to 19 (MTRWVQTFLLLVAVIRSYA) form the signal peptide. The 58-residue stretch at 42–99 (GCPGIPGVPGPQGPSGPAGAKGEKGFPGIPGKMGPTGLKGERGISGPKGQKGDKGDPG) folds into the Collagen-like domain. Residues 100–318 (IPVVGMAQNC…VSEIKFRPQP (219 aa)) enclose the Fibrinogen C-terminal domain. A disulfide bridge links cysteine 109 with cysteine 137. N-linked (GlcNAc...) asparagine glycans are attached at residues asparagine 205 and asparagine 222. Residue aspartate 253 coordinates Ca(2+). N-linked (GlcNAc...) asparagine glycosylation is present at asparagine 254. Ca(2+)-binding residues include aspartate 255 and serine 257. Cysteine 261 and cysteine 274 are disulfide-bonded. 273 to 275 (SCH) serves as a coordination point for a carbohydrate. Asparagine 287 carries an N-linked (GlcNAc...) asparagine glycan.

This sequence belongs to the ficolin lectin family. As to quaternary structure, homotrimer. May form higher-order oligomers. In terms of processing, N-glycosylated. As to expression, expressed in peripheral blood leukocytes. Also detected at lower levels in spleen and lung.

Its subcellular location is the secreted. May function in innate immunity through activation of the lectin complement pathway. Binds to GalNAc and GlcNAc carbohydrate moieties. The chain is Ficolin-1-B from Xenopus laevis (African clawed frog).